Here is a 315-residue protein sequence, read N- to C-terminus: Protein FRA10AC1 homolog (315 aa).

N-acetylmethionine is present on methionine 1. Residues 1 to 28 form a disordered region; the sequence is MHGHGGYDSDFSDDEQGGGSSKKRKKTV. A phosphoserine mark is found at serine 9 and serine 12. Lysine 36 is modified (N6-acetyllysine). The segment covering 225 to 235 has biased composition (basic residues); sequence KEIKSTKKRSK. The tract at residues 225–308 is disordered; that stretch reads KEIKSTKKRS…EKSQEEEFDD (84 aa). Basic and acidic residues predominate over residues 236-245; it reads TKTESDESPH. 2 positions are modified to phosphoserine: serine 251 and serine 252. Residues 257–279 show a composition bias toward basic and acidic residues; that stretch reads SQGKDEGHSSSKRSEDSRNRNAG. Phosphoserine is present on residues serine 283 and serine 285.

Interacts with ESS2.

The protein localises to the nucleus. Functionally, may be involved in pre-mRNA splicing. The sequence is that of Protein FRA10AC1 homolog (Fra10ac1) from Rattus norvegicus (Rat).